A 297-amino-acid polypeptide reads, in one-letter code: UTP--glucose-1-phosphate uridylyltransferase YngB (297 aa).

The signal sequence occupies residues M1–P27.

This sequence belongs to the UDPGP type 2 family. In terms of assembly, homodimer.

It carries out the reaction alpha-D-glucose 1-phosphate + UTP + H(+) = UDP-alpha-D-glucose + diphosphate. Its pathway is glycolipid metabolism; diglucosyl-diacylglycerol biosynthesis. Its function is as follows. Catalyzes the formation of UDP-glucose from glucose-1-phosphate and UTP. This is an intermediate step in the biosynthesis of diglucosyl-diacylglycerol (Glc2-DAG), i.e. the predominant glycolipid found in B.subtilis membrane, which is also used as a membrane anchor for lipoteichoic acid (LTA). YngB contributes to wall teichoic acid (WTA) glucosylation and glycolipid formation under anaerobic fermentative growth conditions. Might also enter other glycosylation pathways, leading to the decorating of other cell envelope components with glucose residues under anaerobic or other growth conditions. This is UTP--glucose-1-phosphate uridylyltransferase YngB (yngB) from Bacillus subtilis (strain 168).